We begin with the raw amino-acid sequence, 706 residues long: Gamma-adducin (706 aa).

The segment covering 1–10 (MSSDASQGVI) has biased composition (polar residues). The disordered stretch occupies residues 1–20 (MSSDASQGVITTPPPPSMPH). At S2 the chain carries N-acetylserine. Residues S42, S64, S402, S414, S423, S442, and S461 each carry the phosphoserine modification. Disordered stretches follow at residues 471-497 (AEDS…LNTN), 535-555 (PSTM…NPFS), 575-610 (GLED…KLEE), and 666-706 (EKIE…KVEA). Residue K484 forms a Glycyl lysine isopeptide (Lys-Gly) (interchain with G-Cter in SUMO2) linkage. Phosphoserine occurs at positions 585, 590, 673, 677, 679, 681, and 683. Residues 589–602 (SSVSQIQSQTQSPQ) are compositionally biased toward low complexity. Residues 682–706 (PSKKKKKFRTPSFLKKNKKKEKVEA) show a composition bias toward basic residues. An interaction with calmodulin region spans residues 684 to 701 (KKKKKFRTPSFLKKNKKK).

The protein belongs to the aldolase class II family. Adducin subfamily. As to quaternary structure, heterodimer of an alpha and a gamma subunit. Sumoylated. In terms of processing, proteolytically cleaved by asparagine endopeptidase (AEP) into 2 fragments. Overexpression of the 1-357 fragment induces neuronal apoptosis, and overexpression of either 1-357 or 358-706 fragment increases the degeneration of dendritic spines. Overexpression of the 1-357 fragment impairs neurite outgrowth by downregulating the expression of Rac2, and induces synaptic dysfunction and cognitive impairments in tau P301S transgenic mice, a mouse model for Alzheimer disease (AD). In terms of tissue distribution, ubiquitously expressed. As to expression, cleavage fragment 1-357 is abundantly expressed in the brain of patients with Alzheimer disease (AD), but hardly detectable in age-matched control individuals (at protein level).

The protein resides in the cytoplasm. Its subcellular location is the cytoskeleton. It is found in the cell membrane. Functionally, membrane-cytoskeleton-associated protein that promotes the assembly of the spectrin-actin network. Plays a role in actin filament capping. Binds to calmodulin. Involved in myogenic reactivity of the renal afferent arteriole (Af-art), renal interlobular arteries and middle cerebral artery (MCA) to increased perfusion pressure. Involved in regulation of potassium channels in the vascular smooth muscle cells (VSMCs) of the Af-art and MCA ex vivo. Involved in regulation of glomerular capillary pressure, glomerular filtration rate (GFR) and glomerular nephrin expression in response to hypertension. Involved in renal blood flow (RBF) autoregulation. Plays a role in podocyte structure and function. Regulates globular monomer actin (G-actin) and filamentous polymer actin (F-actin) ratios in the primary podocytes affecting actin cytoskeleton organization. Regulates expression of synaptopodin, RhoA, Rac1 and CDC42 in the renal cortex and the primary podocytes. Regulates expression of nephrin in the glomeruli and in the primary podocytes, expression of nephrin and podocinin in the renal cortex, and expression of focal adhesion proteins integrin alpha-3 and integrin beta-1 in the glomeruli. Involved in cell migration and cell adhesion of podocytes, and in podocyte foot process effacement. Regulates expression of profibrotics markers MMP2, MMP9, TGF beta-1, tubular tight junction protein E-cadherin, and mesenchymal markers vimentin and alpha-SMA. Promotes the growth of neurites. This Homo sapiens (Human) protein is Gamma-adducin (ADD3).